Here is a 182-residue protein sequence, read N- to C-terminus: PRKR-interacting protein 1 homolog (182 aa).

Basic and acidic residues-rich tracts occupy residues 1-18 (MAVE…KKES), 27-43 (PAEE…RNPD), and 114-124 (IENQKAAEDRT). Disordered regions lie at residues 1–80 (MAVE…GEFH) and 114–182 (IENQ…MGKR). The segment at 51 to 143 (KPKEWNPRAP…LKQKKLMAKK (93 aa)) is required for RNA-binding. The stretch at 99–157 (LSEKQKLDEEYKEKLIENQKAAEDRTAKRRKKREKLKQKKLMAKKAKMESQKEEDSEKS) forms a coiled coil. The segment covering 125–143 (AKRRKKREKLKQKKLMAKK) has biased composition (basic residues). Residues 126-138 (KRRKKREKLKQKK) are required for nuclear localization. Over residues 144–156 (AKMESQKEEDSEK) the composition is skewed to basic and acidic residues. Acidic residues predominate over residues 164 to 173 (EGEEKDDDAE).

It belongs to the PRKRIP1 family. Component of the pre-catalytic and post-catalytic spliceosome complexes.

Its subcellular location is the nucleus. It is found in the nucleolus. Functionally, required for pre-mRNA splicing as component of the spliceosome. Binds double-stranded RNA. The sequence is that of PRKR-interacting protein 1 homolog (prkrip1) from Danio rerio (Zebrafish).